Consider the following 134-residue polypeptide: Acyl carrier protein SF2, chloroplastic (134 aa).

The N-terminal 51 residues, M1–C51, are a transit peptide targeting the chloroplast. The Carrier domain occupies P55 to V130. S90 carries the post-translational modification O-(pantetheine 4'-phosphoryl)serine.

The protein belongs to the acyl carrier protein (ACP) family. In terms of processing, 4'-phosphopantetheine is transferred from CoA to a specific serine of apo-ACP by acpS. This modification is essential for activity because fatty acids are bound in thioester linkage to the sulfhydryl of the prosthetic group.

The protein localises to the plastid. It localises to the chloroplast. Its pathway is lipid metabolism; fatty acid biosynthesis. Carrier of the growing fatty acid chain in fatty acid biosynthesis. This is Acyl carrier protein SF2, chloroplastic (Acl1.1) from Brassica campestris (Field mustard).